Reading from the N-terminus, the 192-residue chain is Vascular endothelial growth factor A (192 aa).

A signal peptide spans 1 to 26 (MNFLLTWIHWGLAALLYFHNAKVLQA). Disulfide bonds link C52-C94, C83-C128, and C87-C130. An N-linked (GlcNAc...) asparagine glycan is attached at N101.

This sequence belongs to the PDGF/VEGF growth factor family. Homodimer; disulfide-linked. Also found as heterodimer with PGF. Interacts with FLT1/VEGFR1 and KDR/VEGFR2 receptors, heparan sulfate and heparin. As to expression, expressed by the venom gland, and probably other tissues.

It localises to the secreted. Functionally, growth factor active in angiogenesis, vasculogenesis and endothelial cell growth. Induces endothelial cell proliferation, promotes cell migration, inhibits apoptosis and induces permeabilization of blood vessels. This is Vascular endothelial growth factor A from Agkistrodon piscivorus piscivorus (Eastern cottonmouth).